We begin with the raw amino-acid sequence, 393 residues long: Homogentisate phytyltransferase 1, chloroplastic (393 aa).

Residues 1–36 constitute a chloroplast transit peptide; the sequence is MESLLSSSSLVSAAGGFCWKKQNLKLHSLSEIRVLR. 9 helical membrane passes run 108–128, 133–153, 170–190, 205–227, 232–252, 271–291, 314–334, 338–358, and 371–391; these read TVIG…EKVS, LLFT…IYIV, YLPL…VASF, PLFW…LPLL, FALV…QIAF, LIFA…FKDI, VFWT…LVGA, FIWS…TLWA, and ITSC…LLPF.

It belongs to the UbiA prenyltransferase family.

It localises to the plastid. The protein resides in the chloroplast membrane. The enzyme catalyses phytyl diphosphate + homogentisate + H(+) = 2-methyl-6-phytyl-1,4-benzene-1,4-diol + CO2 + diphosphate. It functions in the pathway cofactor biosynthesis; tocopherol biosynthesis. Involved in the synthesis of tocopherol (vitamin E). Catalyzes the condensation of homogentisate and phytyl diphosphate to form dimethylphytylhydrquinone. Low activity with geranylgeranyl diphosphate as substrate, but no activity with farnesyl diphosphate or solanesyl diphosphate. Tocopherol functions to limit lipid oxidation during seed desiccation, quiescence and germination and early seedling development. Protects thylakoid membrane lipids from photooxidation and is required for low-temperature adaptation. This chain is Homogentisate phytyltransferase 1, chloroplastic (HPT1), found in Arabidopsis thaliana (Mouse-ear cress).